A 782-amino-acid polypeptide reads, in one-letter code: Endonuclease MutS2 (782 aa).

336–343 (GPNTGGKT) is a binding site for ATP. Residues 707–782 (LDLRGYRYED…GFGVTVATLK (76 aa)) form the Smr domain.

Belongs to the DNA mismatch repair MutS family. MutS2 subfamily. In terms of assembly, homodimer. Binds to stalled ribosomes, contacting rRNA.

Functionally, endonuclease that is involved in the suppression of homologous recombination and thus may have a key role in the control of bacterial genetic diversity. Its function is as follows. Acts as a ribosome collision sensor, splitting the ribosome into its 2 subunits. Detects stalled/collided 70S ribosomes which it binds and splits by an ATP-hydrolysis driven conformational change. Acts upstream of the ribosome quality control system (RQC), a ribosome-associated complex that mediates the extraction of incompletely synthesized nascent chains from stalled ribosomes and their subsequent degradation. Probably generates substrates for RQC. This chain is Endonuclease MutS2, found in Staphylococcus aureus (strain MRSA252).